Consider the following 797-residue polypeptide: Discoidin domain-containing receptor tyrosine kinase B (797 aa).

The first 19 residues, 1-19, serve as a signal peptide directing secretion; sequence MKLLLYLFGVTFHSNTVVA. At 20–384 the chain is on the extracellular side; that stretch reads LELRECSHQL…VTEHDDGTSM (365 aa). Residues 25-181 enclose the F5/8 type C domain; the sequence is CSHQLGMSNR…VCMRVEVFGC (157 aa). Cysteine 25 and cysteine 181 form a disulfide bridge. The disordered stretch occupies residues 46–66; sequence SFDLQSTGPQHARAHQESGSG. 4 N-linked (GlcNAc...) asparagine glycosylation sites follow: asparagine 141, asparagine 167, asparagine 264, and asparagine 353. A helical transmembrane segment spans residues 385 to 405; it reads FAFIIFFFMFLIVAVIILTVL. At 406-797 the chain is on the cytoplasmic side; sequence YRKREYRVKA…LVHTSPHIHF (392 aa). The region spanning 527–785 is the Protein kinase domain; the sequence is LICVSRIGQG…PSFENVHLHL (259 aa). Residues 533-541 and lysine 554 contribute to the ATP site; that span reads IGQGEFGEV. Residue aspartate 645 is the Proton acceptor of the active site.

It belongs to the protein kinase superfamily. Tyr protein kinase family. Insulin receptor subfamily. In terms of assembly, interacts with shc-1. Autophosphorylated on tyrosine residues. Post-translationally, N-glycosylation at Asn-141 is required for axon regeneration after injury but is dispensable for kinase activity and axon localization. Expressed in some neurons in head and tail, some motoneurons in ventral nerve cord, in PVP interneurons, seam cells, rectal gland cells, vulva cells and some non-neuronal cells in the tail. Expressed in D-type motor neurons.

The protein resides in the cell membrane. It is found in the cell projection. The protein localises to the axon. Its subcellular location is the perikaryon. It carries out the reaction L-tyrosyl-[protein] + ATP = O-phospho-L-tyrosyl-[protein] + ADP + H(+). Its function is as follows. Tyrosine-protein kinase receptor which, together with ddr-1, is involved in axon guidance to establish the tracts for the ventral and dorsal nerve cords during nervous system development. Acts upstream of the adapter shc-1, and the tyrosine kinase receptors svh-1 and svh-2 to regulate axon regeneration following injury in D-type motor neurons. May mediate axon regeneration in association with the collagen emb-9. This chain is Discoidin domain-containing receptor tyrosine kinase B, found in Caenorhabditis elegans.